Consider the following 276-residue polypeptide: Large ribosomal subunit protein uL2 (276 aa).

Residues 219–276 (TVRGSVMNPNDHPHGGGEGRAPIGRKSPMSPWGKPTLGYKTRQRNKPSDKYIVRKRKK) are disordered.

It belongs to the universal ribosomal protein uL2 family. Part of the 50S ribosomal subunit. Forms a bridge to the 30S subunit in the 70S ribosome.

Its function is as follows. One of the primary rRNA binding proteins. Required for association of the 30S and 50S subunits to form the 70S ribosome, for tRNA binding and peptide bond formation. It has been suggested to have peptidyltransferase activity; this is somewhat controversial. Makes several contacts with the 16S rRNA in the 70S ribosome. The protein is Large ribosomal subunit protein uL2 of Oceanobacillus iheyensis (strain DSM 14371 / CIP 107618 / JCM 11309 / KCTC 3954 / HTE831).